The primary structure comprises 352 residues: tRNA N6-adenosine threonylcarbamoyltransferase (352 aa).

Residues His-109 and His-113 each coordinate Fe cation. Substrate is bound by residues 136-140, Asp-169, Gly-182, Asp-186, and Asn-284; that span reads TVSGG. Fe cation is bound at residue Asp-312.

It belongs to the KAE1 / TsaD family. The cofactor is Fe(2+).

It localises to the cytoplasm. It carries out the reaction L-threonylcarbamoyladenylate + adenosine(37) in tRNA = N(6)-L-threonylcarbamoyladenosine(37) in tRNA + AMP + H(+). Functionally, required for the formation of a threonylcarbamoyl group on adenosine at position 37 (t(6)A37) in tRNAs that read codons beginning with adenine. Is involved in the transfer of the threonylcarbamoyl moiety of threonylcarbamoyl-AMP (TC-AMP) to the N6 group of A37, together with TsaE and TsaB. TsaD likely plays a direct catalytic role in this reaction. The polypeptide is tRNA N6-adenosine threonylcarbamoyltransferase (Chloroherpeton thalassium (strain ATCC 35110 / GB-78)).